Consider the following 198-residue polypeptide: MSFSPLIRQLIESLRILPGVGQKSAQRMALMLLERDRSGGLKLAQALTAAMEGVGHCRQCRTLSEEELCPQCADPRRDDSLLCVVEGPLDVFAVEQTGYRGRYFVLKGHLSPLDGLGPEAIGIPELEARIRDGAFSEVILATNPTVEGEATAHYIAQLLAGRGLTLSRIAHGVPLGGELELVDGGTLAHALAGRRPIS.

A C4-type zinc finger spans residues 57-72 (CRQCRTLSEEELCPQC). One can recognise a Toprim domain in the interval 80 to 174 (SLLCVVEGPL…TLSRIAHGVP (95 aa)).

It belongs to the RecR family.

Its function is as follows. May play a role in DNA repair. It seems to be involved in an RecBC-independent recombinational process of DNA repair. It may act with RecF and RecO. The sequence is that of Recombination protein RecR from Pseudomonas aeruginosa (strain LESB58).